We begin with the raw amino-acid sequence, 291 residues long: NAD kinase (291 aa).

Residue aspartate 55 is the Proton acceptor of the active site. Residues 55 to 56 (DG), arginine 60, 130 to 131 (NE), aspartate 160, and 171 to 176 (TAYAFS) contribute to the NAD(+) site.

The protein belongs to the NAD kinase family. A divalent metal cation is required as a cofactor.

It localises to the cytoplasm. The catalysed reaction is NAD(+) + ATP = ADP + NADP(+) + H(+). Involved in the regulation of the intracellular balance of NAD and NADP, and is a key enzyme in the biosynthesis of NADP. Catalyzes specifically the phosphorylation on 2'-hydroxyl of the adenosine moiety of NAD to yield NADP. The protein is NAD kinase of Corynebacterium glutamicum (strain ATCC 13032 / DSM 20300 / JCM 1318 / BCRC 11384 / CCUG 27702 / LMG 3730 / NBRC 12168 / NCIMB 10025 / NRRL B-2784 / 534).